Here is a 191-residue protein sequence, read N- to C-terminus: MDPNTPADFFKGSSKFHTYYSQTKKGGGVIDLGLSLRTIQHETYLPPARMIGLDGYGELIDWSQPSYNSITQLKSEDTGHQRLAQGYYNNEGESRGKYAYVKVNLDGLVVGRKVCLVDQGAYATLALQLNDMFGMQTVSGLRLFQTESEFSLVYRDREGIWRNVGDVPWKEFVESVDRMRIARRNDALLPF.

An EAR-like (transcriptional repression) motif is present at residues 32 to 36 (LGLSL). The PB1 domain maps to 98–184 (YAYVKVNLDG…SVDRMRIARR (87 aa)).

This sequence belongs to the Aux/IAA family. Homodimers and heterodimers.

The protein resides in the nucleus. Functionally, aux/IAA proteins are short-lived transcriptional factors that function as repressors of early auxin response genes at low auxin concentrations. Repression is thought to result from the interaction with auxin response factors (ARFs), proteins that bind to the auxin-responsive promoter element (AuxRE). Formation of heterodimers with ARF proteins may alter their ability to modulate early auxin response genes expression. The polypeptide is Auxin-responsive protein IAA32 (Arabidopsis thaliana (Mouse-ear cress)).